The primary structure comprises 213 residues: tRNA (guanine-N(7)-)-methyltransferase (213 aa).

Residues aspartate 44, glutamate 69, asparagine 96, and aspartate 119 each contribute to the S-adenosyl-L-methionine site. Aspartate 119 is a catalytic residue. 2 residues coordinate substrate: lysine 123 and aspartate 155.

It belongs to the class I-like SAM-binding methyltransferase superfamily. TrmB family.

It carries out the reaction guanosine(46) in tRNA + S-adenosyl-L-methionine = N(7)-methylguanosine(46) in tRNA + S-adenosyl-L-homocysteine. Its pathway is tRNA modification; N(7)-methylguanine-tRNA biosynthesis. Its function is as follows. Catalyzes the formation of N(7)-methylguanine at position 46 (m7G46) in tRNA. The protein is tRNA (guanine-N(7)-)-methyltransferase of Thermosynechococcus vestitus (strain NIES-2133 / IAM M-273 / BP-1).